Here is a 366-residue protein sequence, read N- to C-terminus: tRNA N6-adenosine threonylcarbamoyltransferase (366 aa).

A divalent metal cation is bound by residues H130, H134, and Y151. Residues 151 to 155 (YVSGG), D183, G198, E202, and N297 each bind substrate. D325 serves as a coordination point for a divalent metal cation.

The protein belongs to the KAE1 / TsaD family. Component of the EKC/KEOPS complex composed of at least BUD32, CGI121, GON7, KAE1 and PCC1; the whole complex dimerizes. It depends on a divalent metal cation as a cofactor.

It is found in the cytoplasm. Its subcellular location is the nucleus. The catalysed reaction is L-threonylcarbamoyladenylate + adenosine(37) in tRNA = N(6)-L-threonylcarbamoyladenosine(37) in tRNA + AMP + H(+). Component of the EKC/KEOPS complex that is required for the formation of a threonylcarbamoyl group on adenosine at position 37 (t(6)A37) in tRNAs that read codons beginning with adenine. The complex is probably involved in the transfer of the threonylcarbamoyl moiety of threonylcarbamoyl-AMP (TC-AMP) to the N6 group of A37. KAE1 likely plays a direct catalytic role in this reaction, but requires other protein(s) of the complex to fulfill this activity. The EKC/KEOPS complex also promotes both telomere uncapping and telomere elongation. The complex is required for efficient recruitment of transcriptional coactivators. In Cryptococcus neoformans var. neoformans serotype D (strain JEC21 / ATCC MYA-565) (Filobasidiella neoformans), this protein is tRNA N6-adenosine threonylcarbamoyltransferase.